Consider the following 122-residue polypeptide: Large ribosomal subunit protein uL14 (122 aa).

The protein belongs to the universal ribosomal protein uL14 family. As to quaternary structure, part of the 50S ribosomal subunit. Forms a cluster with proteins L3 and L19. In the 70S ribosome, L14 and L19 interact and together make contacts with the 16S rRNA in bridges B5 and B8.

Its function is as follows. Binds to 23S rRNA. Forms part of two intersubunit bridges in the 70S ribosome. This is Large ribosomal subunit protein uL14 from Phytoplasma mali (strain AT).